Here is a 510-residue protein sequence, read N- to C-terminus: MIIVTFFWVGIVLSAIWTFYKVVLYPYRVSPLRTLPQSQRGHWLWNHAFSEFLQPIGQLHAELLLQIPNDGMICLRGLFGAPKIFLTSPKSLADVLVHRADDFEKLPGERKILRAVVGDGLVTAEGDVHYQQKRKLLAGFTPPKIRALYPVFWKEATALTQQIRRTLTHDGSGIYTGTTDMVYWAPRVSMDMIGAAGFGQSFHSLRDADSEIIHCYEKAFAIGAGHLLCVFADTLLPRIILQWLPWPRWRQFRQNIDSIRDFCHQWVTDAKATTALGDGIPNNLLANMIHTGEYTFQELIEQVRTFLAAGHENTSSVVMWVMLALASDSQLQSRLRQELQANLPEVELDEVDLAILEQLPLLNAVVSEAIRLFPPLPIGNRIAIRDTTVMNHPIPKGTPFLIVPRAINRSSELWGPDADRFNADRWINPDTGRFNNHGGASSNYSFLSFFHGPHNCIGQNFARAELRTVVAAVIRSFDMVLDNPAADVSPVGWFTPRPADGVKVKLRSLV.

The helical transmembrane segment at 2–22 threads the bilayer; it reads IIVTFFWVGIVLSAIWTFYKV. N-linked (GlcNAc...) asparagine glycans are attached at residues N313, N408, and N443. C456 lines the heme pocket.

This sequence belongs to the cytochrome P450 family. Heme serves as cofactor.

Its subcellular location is the membrane. Its pathway is secondary metabolite biosynthesis. Cytochrome P450 monooxygenase; part of the gene cluster that mediates the biosynthesis of the indole diterpenes penitrems. The geranylgeranyl diphosphate (GGPP) synthase ptmG catalyzes the first step in penitrem biosynthesis via conversion of farnesyl pyrophosphate and isopentyl pyrophosphate into geranylgeranyl pyrophosphate (GGPP). Condensation of indole-3-glycerol phosphate with GGPP by the prenyl transferase ptmC then forms 3-geranylgeranylindole (3-GGI). Epoxidation by the FAD-dependent monooxygenase ptmM leads to a epoxidized-GGI that is substrate of the terpene cyclase ptmB for cyclization to yield paspaline. Paspaline is subsequently converted to 13-desoxypaxilline by the cytochrome P450 monooxygenase ptmP, the latter being then converted to paxilline by the cytochrome P450 monooxygenase ptmQ. Paxilline is converted to beta-paxitriol via C-10 ketoreduction by the short-chain dehydrogenase ptmH which can be monoprenylated at the C-20 by the indole diterpene prenyltransferase ptmD. A two-step elimination (acetylation and elimination) process performed by the O-acetyltransferase ptmV and ptmI leads to the production of the prenylated form of penijanthine. The FAD-linked oxidoreductase ptmO then converts the prenylated form of penijanthine into PC-M5 which is in turn transformed into PC-M4 by the aromatic dimethylallyltransferase ptmE. Five sequential oxidative transformations performed by the cytochrome P450 monooxygenases ptmK, ptmU, ptmL, ptmN and ptmJ yield the various penitrem compounds. PtmK, ptmU and ptmM are involved in the formation of the key bicyclic ring of penitrem C via the formation of the intermediates secopenitrem D and penitrem D. PtmL catalyzes the epoxidation of penitrem D and C to yield penitrem B and F, respectively. PtmJ catalyzes the last benzylic hydroxylation to convert penitrem B to prenitrem E and penitrem F to penitrem A. The polypeptide is Cytochrome P450 monooxygenase ptmK (Penicillium ochrochloron).